The sequence spans 378 residues: Branched-chain-amino-acid aminotransferase (378 aa).

An N6-(pyridoxal phosphate)lysine modification is found at Lys-213.

It belongs to the class-IV pyridoxal-phosphate-dependent aminotransferase family. Homodimer. Pyridoxal 5'-phosphate is required as a cofactor.

It catalyses the reaction L-leucine + 2-oxoglutarate = 4-methyl-2-oxopentanoate + L-glutamate. It carries out the reaction L-isoleucine + 2-oxoglutarate = (S)-3-methyl-2-oxopentanoate + L-glutamate. The enzyme catalyses L-valine + 2-oxoglutarate = 3-methyl-2-oxobutanoate + L-glutamate. In terms of biological role, catalyzes the first reaction in the catabolism of the essential branched chain amino acids leucine, isoleucine, and valine. The protein is Branched-chain-amino-acid aminotransferase (bcaA) of Dictyostelium discoideum (Social amoeba).